The chain runs to 172 residues: 3-hydroxydecanoyl-[acyl-carrier-protein] dehydratase (172 aa).

The active site involves H71.

It belongs to the thioester dehydratase family. FabA subfamily. As to quaternary structure, homodimer.

It is found in the cytoplasm. The enzyme catalyses a (3R)-hydroxyacyl-[ACP] = a (2E)-enoyl-[ACP] + H2O. The catalysed reaction is (3R)-hydroxydecanoyl-[ACP] = (2E)-decenoyl-[ACP] + H2O. It carries out the reaction (2E)-decenoyl-[ACP] = (3Z)-decenoyl-[ACP]. It functions in the pathway lipid metabolism; fatty acid biosynthesis. Functionally, necessary for the introduction of cis unsaturation into fatty acids. Catalyzes the dehydration of (3R)-3-hydroxydecanoyl-ACP to E-(2)-decenoyl-ACP and then its isomerization to Z-(3)-decenoyl-ACP. Can catalyze the dehydratase reaction for beta-hydroxyacyl-ACPs with saturated chain lengths up to 16:0, being most active on intermediate chain length. This chain is 3-hydroxydecanoyl-[acyl-carrier-protein] dehydratase, found in Maricaulis maris (strain MCS10) (Caulobacter maris).